The chain runs to 200 residues: Recombination protein RecR (200 aa).

The C4-type zinc-finger motif lies at cysteine 58 to cysteine 73. A Toprim domain is found at aspartate 81 to proline 176.

Belongs to the RecR family.

Its function is as follows. May play a role in DNA repair. It seems to be involved in an RecBC-independent recombinational process of DNA repair. It may act with RecF and RecO. This Pelotomaculum thermopropionicum (strain DSM 13744 / JCM 10971 / SI) protein is Recombination protein RecR.